The chain runs to 206 residues: Imidazoleglycerol-phosphate dehydratase (206 aa).

It belongs to the imidazoleglycerol-phosphate dehydratase family.

The protein resides in the cytoplasm. The catalysed reaction is D-erythro-1-(imidazol-4-yl)glycerol 3-phosphate = 3-(imidazol-4-yl)-2-oxopropyl phosphate + H2O. The protein operates within amino-acid biosynthesis; L-histidine biosynthesis; L-histidine from 5-phospho-alpha-D-ribose 1-diphosphate: step 6/9. The polypeptide is Imidazoleglycerol-phosphate dehydratase (Synechococcus sp. (strain JA-3-3Ab) (Cyanobacteria bacterium Yellowstone A-Prime)).